The sequence spans 1480 residues: Nonribosomal peptide synthetase inpA (1480 aa).

Over residues 1–17 (MSHSMSSSSSSSSSSSS) the composition is skewed to low complexity. The tract at residues 1-24 (MSHSMSSSSSSSSSSSSSRDEGQS) is disordered. The tract at residues 44–458 (VQDVYPCTPL…QLISPQDLDQ (415 aa)) is condensation. Residues 479 to 871 (QRHIDTRPDA…GRKDSQVKIR (393 aa)) form an adenylation region. Residues 1003 to 1082 (DSTNKVALRL…GLAAMITSPH (80 aa)) enclose the Carrier domain. Serine 1041 carries the post-translational modification O-(pantetheine 4'-phosphoryl)serine. A thioesterase (TE) domain region spans residues 1117–1436 (KVFLTGATGL…VLAMLQDPQM (320 aa)).

The protein belongs to the NRP synthetase family.

Its pathway is secondary metabolite biosynthesis. Nonribosomal peptide synthetase; part of the inp gene cluster that mediates the biosynthesis of fellutamide B, a mycotoxin that acts as a proteasome inhibitor. In the first step of fellutabmide B biosynthesis, inpC activates 3-hydroxydodecanoic acid to generate 3-hydroxydodecanoyl-AMP that is then loaded onto the T0 domain of inpB. The 3-hydroxydodecanoyl-S-phosphopantetheinyl-T0 is sequentially extended with L-Asn and L-Gln by the two CAT modules of inpB. The linear lipodipeptide from inpB is then transferred onto inpA for the addition of the third amino acid, L-Leu. Reductive releasing of the lipotripeptide by the TE domain of inpA produces (2S)-fellutamide B. InpF might be involved in the release and transfer of the lipodipeptide from inpB to inpA. The inp cluster-encoded proteasome subunit inpE confers resistance to internally produced fellutamides. The MFS efflux transporter inpD may contribute to fellutamide resistance as well. The sequence is that of Nonribosomal peptide synthetase inpA from Emericella nidulans (strain FGSC A4 / ATCC 38163 / CBS 112.46 / NRRL 194 / M139) (Aspergillus nidulans).